Here is a 167-residue protein sequence, read N- to C-terminus: Disulfide bond formation protein B (167 aa).

Over 1 to 12 the chain is Cytoplasmic; the sequence is MFLNLLDAPRRL. The helical transmembrane segment at 13-29 threads the bilayer; that stretch reads LALVALGCVALLAFGLY. Over 30–47 the chain is Periplasmic; that stretch reads LQHVVGLEPCPMCIVQRY. A disulfide bond links Cys-39 and Cys-42. A helical membrane pass occupies residues 48 to 63; sequence ALVLVAIVAGLTAITS. The Cytoplasmic segment spans residues 64–69; that stretch reads NKKGLI. The helical transmembrane segment at 70–87 threads the bilayer; that stretch reads TGSGVLLLLAGFGAFVAA. At 88–143 the chain is on the periplasmic side; sequence RQSFLQWYPPEVASCGRDFYGMIETFPLQRAIPMIFKGSGDCAKVDWTFLGGSIAN. Cys-102 and Cys-129 form a disulfide bridge. The helical transmembrane segment at 144–162 threads the bilayer; sequence WSFVCFAVIGLTALTLIAR. The Cytoplasmic portion of the chain corresponds to 163–167; it reads LARQR.

The protein belongs to the DsbB family.

Its subcellular location is the cell inner membrane. In terms of biological role, required for disulfide bond formation in some periplasmic proteins. Acts by oxidizing the DsbA protein. The chain is Disulfide bond formation protein B from Polaromonas naphthalenivorans (strain CJ2).